A 258-amino-acid chain; its full sequence is Transcription factor ORG3 (258 aa).

One can recognise a bHLH domain in the interval V76–L128.

In terms of assembly, homodimer. In terms of tissue distribution, expressed in vascular tissues. Detected in roots.

The protein resides in the nucleus. The sequence is that of Transcription factor ORG3 (ORG3) from Arabidopsis thaliana (Mouse-ear cress).